The sequence spans 51 residues: Insulin (51 aa).

Disulfide bonds link Cys-7/Cys-37, Cys-19/Cys-50, and Cys-36/Cys-41.

It belongs to the insulin family. Heterodimer of a B chain and an A chain linked by two disulfide bonds.

Its subcellular location is the secreted. Insulin decreases blood glucose concentration. It increases cell permeability to monosaccharides, amino acids and fatty acids. It accelerates glycolysis, the pentose phosphate cycle, and glycogen synthesis in liver. The chain is Insulin (INS) from Saimiri sciureus (Common squirrel monkey).